A 169-amino-acid chain; its full sequence is NAD(P)H-quinone oxidoreductase subunit J, chloroplastic (169 aa).

Belongs to the complex I 30 kDa subunit family. NDH is composed of at least 16 different subunits, 5 of which are encoded in the nucleus.

The protein localises to the plastid. The protein resides in the chloroplast thylakoid membrane. The enzyme catalyses a plastoquinone + NADH + (n+1) H(+)(in) = a plastoquinol + NAD(+) + n H(+)(out). The catalysed reaction is a plastoquinone + NADPH + (n+1) H(+)(in) = a plastoquinol + NADP(+) + n H(+)(out). Its function is as follows. NDH shuttles electrons from NAD(P)H:plastoquinone, via FMN and iron-sulfur (Fe-S) centers, to quinones in the photosynthetic chain and possibly in a chloroplast respiratory chain. The immediate electron acceptor for the enzyme in this species is believed to be plastoquinone. Couples the redox reaction to proton translocation, and thus conserves the redox energy in a proton gradient. This is NAD(P)H-quinone oxidoreductase subunit J, chloroplastic from Physcomitrium patens (Spreading-leaved earth moss).